A 315-amino-acid polypeptide reads, in one-letter code: Putative protein phosphatase 2C 24 (315 aa).

One can recognise a PPM-type phosphatase domain in the interval 71-314 (ALRMEAASCF…DDITVVVAYI (244 aa)). Mn(2+)-binding residues include aspartate 102, glycine 103, aspartate 238, and aspartate 305.

It belongs to the PP2C family. Mg(2+) is required as a cofactor. Requires Mn(2+) as cofactor.

The enzyme catalyses O-phospho-L-seryl-[protein] + H2O = L-seryl-[protein] + phosphate. It carries out the reaction O-phospho-L-threonyl-[protein] + H2O = L-threonyl-[protein] + phosphate. The protein is Putative protein phosphatase 2C 24 of Oryza sativa subsp. japonica (Rice).